An 89-amino-acid chain; its full sequence is ATP synthase subunit H, mitochondrial (89 aa).

As to quaternary structure, F-type ATP synthases have 2 components, the catalytic core F(1) and the membrane-embedded component F(0), linked together by a central stalk and a peripheral stalk. The central stalk, also called rotor shaft, is often seen as part of F(1). The peripheral stalk is seen as part of F(0). F(0) contains the membrane channel next to the rotor. F-type ATP synthases form dimers but each monomer functions independently in ATP generation. The dimer consists of 18 different polypeptides: ATP1 (subunit alpha, part of F(1), 3 molecules per monomer), ATP2 (subunit beta, part of F(1), 3 molecules per monomer), ATP3 (subunit gamma, part of the central stalk), ATP4 (subunit b, part of the peripheral stalk), ATP5/OSCP (subunit 5/OSCP, part of the peripheral stalk), ATP6 (subunit a, part of the peripheral stalk), ATP7 (subunit d, part of the peripheral stalk), ATP8 (subunit 8, part of the peripheral stalk), OLI1 (subunit c, part of the rotor, 10 molecules per monomer), ATP14 (subunit H, part of the peripheral stalk), ATP15 (subunit epsilon, part of the central stalk), ATP16 (subunit delta, part of the central stalk), ATP17 (subunit f, part of the peripheral stalk), ATP18 (subunit i/j, part of the peripheral stalk). Dimer-specific subunits are ATP19 (subunit k, at interface between monomers), ATP20 (subunit g, at interface between monomers), TIM11 (subunit e, at interface between monomers). Also contains subunit L.

Its subcellular location is the mitochondrion inner membrane. Mitochondrial membrane ATP synthase (F(1)F(0) ATP synthase or Complex V) produces ATP from ADP in the presence of a proton gradient across the membrane which is generated by electron transport complexes of the respiratory chain. F-type ATP synthases consist of two structural domains, F(1) - containing the extramembraneous catalytic core, and F(0) - containing the membrane proton channel, linked together by a central stalk and a peripheral stalk. During catalysis, ATP synthesis in the catalytic domain of F(1) is coupled via a rotary mechanism of the central stalk subunits to proton translocation. Part of the peripheral stalk. This Pichia angusta (Yeast) protein is ATP synthase subunit H, mitochondrial.